The chain runs to 638 residues: Sorting nexin-41 (638 aa).

A compositionally biased stretch (low complexity) spans 1–14 (MDSDTSPNPFASSP). The segment at 1 to 69 (MDSDTSPNPF…MGATVPGPKP (69 aa)) is disordered. A compositionally biased stretch (pro residues) spans 15–30 (PSSPSPRPSLPPPVPR). One can recognise a PX domain in the interval 84–201 (GEQVHIVDAL…HRFLEEDVSW (118 aa)). 4 residues coordinate a 1,2-diacyl-sn-glycero-3-phospho-(1D-myo-inositol-3-phosphate): R118, S120, K144, and R168. 3 disordered regions span residues 215 to 239 (KNPLHAPSHNPTFQPTTPTSPSEAP), 408 to 432 (LERGGSVLASPQLEPEAARDERERA), and 545 to 638 (PHPN…LGPL). Residues 225–239 (PTFQPTTPTSPSEAP) are compositionally biased toward low complexity. Residues 423–432 (EAARDERERA) are compositionally biased toward basic and acidic residues. Residues 552–562 (QTQTQVQSQQS) show a composition bias toward low complexity. Basic and acidic residues predominate over residues 585-601 (MKNEIERVEIEIADKPL).

It belongs to the sorting nexin family.

Its subcellular location is the endosome membrane. It is found in the endomembrane system. In terms of biological role, may be required for cytoplasm to vacuole transport (Cvt) and pexophagy. In Cryptococcus neoformans var. neoformans serotype D (strain B-3501A) (Filobasidiella neoformans), this protein is Sorting nexin-41 (SNX41).